The chain runs to 168 residues: CASP-like protein UU-1 (168 aa).

At 1 to 17 (MVELESQEAVTVASTAD) the chain is on the cytoplasmic side. A helical membrane pass occupies residues 18 to 38 (IAVDVSLRLLAAATSLAAAVV). The Extracellular portion of the chain corresponds to 39–54 (VAANHQQRWGIRVDFT). A helical membrane pass occupies residues 55–75 (LFQVWIGFVAVNLVCTVYAAA). Topologically, residues 76-95 (TAAAAARKAMGRWWLHHADA) are cytoplasmic. The chain crosses the membrane as a helical span at residues 96–116 (VVVNLEAAATAGAGAIGSIAM). At 117-136 (WGNEASGWYAVCRLYRRYCN) the chain is on the extracellular side. Residues 137 to 157 (AGAAALALSLAAVLLLGVACA) form a helical membrane-spanning segment. At 158–168 (RSRYPKMPPTT) the chain is on the cytoplasmic side.

The protein belongs to the Casparian strip membrane proteins (CASP) family. Homodimer and heterodimers.

It is found in the cell membrane. The protein is CASP-like protein UU-1 of Oryza sativa subsp. japonica (Rice).